A 307-amino-acid polypeptide reads, in one-letter code: Small ribosomal subunit protein uS5m (307 aa).

Residues 1–13 (MFKRQLSTSVRYL) constitute a mitochondrion transit peptide. Residues 144–208 (LTMKPLVMKR…WDAVRNLKEI (65 aa)) form the S5 DRBM domain.

This sequence belongs to the universal ribosomal protein uS5 family. In terms of assembly, component of the mitochondrial small ribosomal subunit (mt-SSU). Mature yeast 74S mitochondrial ribosomes consist of a small (37S) and a large (54S) subunit. The 37S small subunit contains a 15S ribosomal RNA (15S mt-rRNA) and 34 different proteins. The 54S large subunit contains a 21S rRNA (21S mt-rRNA) and 46 different proteins. uS3m, uS4m and uS5m form the narrow entry site of the mRNA channel.

The protein resides in the mitochondrion. Its function is as follows. Component of the mitochondrial ribosome (mitoribosome), a dedicated translation machinery responsible for the synthesis of mitochondrial genome-encoded proteins, including at least some of the essential transmembrane subunits of the mitochondrial respiratory chain. The mitoribosomes are attached to the mitochondrial inner membrane and translation products are cotranslationally integrated into the membrane. The protein is Small ribosomal subunit protein uS5m (MRPS5) of Saccharomyces cerevisiae (strain ATCC 204508 / S288c) (Baker's yeast).